The primary structure comprises 698 residues: Elongation factor G 1 (698 aa).

The region spanning 8–290 (ERYRNIGICA…AVIEFLPAPV (283 aa)) is the tr-type G domain. GTP contacts are provided by residues 17-24 (AHVDAGKT), 88-92 (DTPGH), and 142-145 (NKMD).

This sequence belongs to the TRAFAC class translation factor GTPase superfamily. Classic translation factor GTPase family. EF-G/EF-2 subfamily.

Its subcellular location is the cytoplasm. Functionally, catalyzes the GTP-dependent ribosomal translocation step during translation elongation. During this step, the ribosome changes from the pre-translocational (PRE) to the post-translocational (POST) state as the newly formed A-site-bound peptidyl-tRNA and P-site-bound deacylated tRNA move to the P and E sites, respectively. Catalyzes the coordinated movement of the two tRNA molecules, the mRNA and conformational changes in the ribosome. In Aliivibrio fischeri (strain ATCC 700601 / ES114) (Vibrio fischeri), this protein is Elongation factor G 1.